Reading from the N-terminus, the 601-residue chain is FAD-binding monooxygenase stcW (601 aa).

FAD contacts are provided by residues 42–43, E64, W73, D84, Y90, and V133; that span reads FS.

Belongs to the FAD-binding monooxygenase family. FAD serves as cofactor.

It functions in the pathway mycotoxin biosynthesis; sterigmatocystin biosynthesis. FAD-binding monooxygenase; part of the gene cluster that mediates the biosynthesis of sterigmatocystin (ST), a polyketide-derived furanocoumarin which is part of the most toxic and carcinogenic compounds among the known mycotoxins. The first step in the biosynthesis of sterigmatocystin is the production of hexanoate by the fatty acid synthase (FAS) units stcJ and stcK. The polyketide backbone is assembled by the non-reducing polyketide synthase stcA by condensation of the starter hexanoyl-CoA and 7 malonyl-CoA extender units followed by cyclization and release of norsolorinic acid. Norsolorinic acid is the first stable intermediate in the biosynthesis of sterigmatocystin and is converted into averantin (AVN) by the ketoreductase stcE which reduces the hexanoate ketone to an alcohol. Averantin is then oxidized into 5'-hydroxyaverantin (HAVN) by the cytochrome P450 monooxygenase stcF. 5'-hydroxyaverantin is further converted to 5'-oxyaverantin (OAVN) by the 5'-hydroxyaverantin dehydrogenase stcG. The next step is the conversion of OAVN into averufin (AVF) which is catalyzed by a yet to be identified enzyme. The cytochrome P450 monooxygenase stcB and the flavin-binding monooxygenase stcW are both required for the conversion of averufin to 1-hydroxyversicolorone. The esterase stcI probably catalyzes the formation of versiconal hemiacetal acetate from 1-hydroxyversicolorone. The oxydoreductase stcN then probably catalyzes the biosynthetic step from versiconal to versicolorin B (VERB). The next step is performed by the versicolorin B desaturase stcL to produce versicolorin A (VERA). The ketoreductase stcU and the cytochrome P450 monooxygenase stcS are involved in the conversion of versicolorin A to demethylsterigmatocystin. The Baeyer-Villiger oxidas stcQ and the reductase stcR might be involved in the biosynthetic step from versicolorin A to demethylsterigmatocystin. The final step in the biosynthesis of sterigmatocystin is the methylation of demethylsterigmatocystin catalyzed by the methyltransferase stcP. This Emericella nidulans (strain FGSC A4 / ATCC 38163 / CBS 112.46 / NRRL 194 / M139) (Aspergillus nidulans) protein is FAD-binding monooxygenase stcW.